The following is a 300-amino-acid chain: Protoheme IX farnesyltransferase (300 aa).

Helical transmembrane passes span 24–44 (VTQL…PGMV), 48–68 (VLLG…AINC), 94–114 (LQIL…LYTF), 118–138 (LTMW…TLLL), 146–166 (IVIG…AVTG), 172–192 (AWIL…VLAL), 217–237 (LHIL…FISG), 239–259 (SGAV…AYAW), and 278–298 (IVYL…RPVI).

Belongs to the UbiA prenyltransferase family. Protoheme IX farnesyltransferase subfamily.

The protein resides in the cell inner membrane. It catalyses the reaction heme b + (2E,6E)-farnesyl diphosphate + H2O = Fe(II)-heme o + diphosphate. The protein operates within porphyrin-containing compound metabolism; heme O biosynthesis; heme O from protoheme: step 1/1. Functionally, converts heme B (protoheme IX) to heme O by substitution of the vinyl group on carbon 2 of heme B porphyrin ring with a hydroxyethyl farnesyl side group. The protein is Protoheme IX farnesyltransferase of Burkholderia pseudomallei (strain 1106a).